The following is a 333-amino-acid chain: UPF0284 protein VNG_1572C (333 aa).

This sequence belongs to the UPF0284 family.

In Halobacterium salinarum (strain ATCC 700922 / JCM 11081 / NRC-1) (Halobacterium halobium), this protein is UPF0284 protein VNG_1572C.